The chain runs to 106 residues: Large ribosomal subunit protein uL24 (106 aa).

This sequence belongs to the universal ribosomal protein uL24 family. Part of the 50S ribosomal subunit.

In terms of biological role, one of two assembly initiator proteins, it binds directly to the 5'-end of the 23S rRNA, where it nucleates assembly of the 50S subunit. Its function is as follows. One of the proteins that surrounds the polypeptide exit tunnel on the outside of the subunit. The polypeptide is Large ribosomal subunit protein uL24 (Gluconobacter oxydans (strain 621H) (Gluconobacter suboxydans)).